A 342-amino-acid polypeptide reads, in one-letter code: Isopentenyl-diphosphate delta-isomerase (342 aa).

11–12 provides a ligand contact to substrate; sequence RK. FMN-binding positions include S68, 69–71, S99, and N128; that span reads SMT. 99–101 contributes to the substrate binding site; it reads SQR. Q162 serves as a coordination point for substrate. E163 serves as a coordination point for Mg(2+). Residues K194, S219, T224, 275-277, and 296-297 contribute to the FMN site; these read GVR and AK.

It belongs to the IPP isomerase type 2 family. As to quaternary structure, homooctamer. Dimer of tetramers. Requires FMN as cofactor. The cofactor is NADPH. It depends on Mg(2+) as a cofactor.

It localises to the cytoplasm. The enzyme catalyses isopentenyl diphosphate = dimethylallyl diphosphate. Its function is as follows. Involved in the biosynthesis of isoprenoids. Catalyzes the 1,3-allylic rearrangement of the homoallylic substrate isopentenyl (IPP) to its allylic isomer, dimethylallyl diphosphate (DMAPP). The polypeptide is Isopentenyl-diphosphate delta-isomerase (Legionella pneumophila subsp. pneumophila (strain Philadelphia 1 / ATCC 33152 / DSM 7513)).